The sequence spans 490 residues: Membrane-bound lytic murein transglycosylase F (490 aa).

Positions 1–32 are cleaved as a signal peptide; the sequence is MFALTAYRLRCAAWLLATGIFLLLAGCSEAKA. A non-LT domain region spans residues 33-269; the sequence is PTALERVQKE…RLKDRYYGHV (237 aa). The tract at residues 270–490 is LT domain; the sequence is DVLGYVGAYT…PDDDEGDGKL (221 aa). E316 is a catalytic residue. The disordered stretch occupies residues 467–490; the sequence is AESGLHLPGVNKTRPDDDEGDGKL.

The protein in the N-terminal section; belongs to the bacterial solute-binding protein 3 family. In the C-terminal section; belongs to the transglycosylase Slt family.

The protein resides in the cell outer membrane. The enzyme catalyses Exolytic cleavage of the (1-&gt;4)-beta-glycosidic linkage between N-acetylmuramic acid (MurNAc) and N-acetylglucosamine (GlcNAc) residues in peptidoglycan, from either the reducing or the non-reducing ends of the peptidoglycan chains, with concomitant formation of a 1,6-anhydrobond in the MurNAc residue.. Its function is as follows. Murein-degrading enzyme that degrades murein glycan strands and insoluble, high-molecular weight murein sacculi, with the concomitant formation of a 1,6-anhydromuramoyl product. Lytic transglycosylases (LTs) play an integral role in the metabolism of the peptidoglycan (PG) sacculus. Their lytic action creates space within the PG sacculus to allow for its expansion as well as for the insertion of various structures such as secretion systems and flagella. The sequence is that of Membrane-bound lytic murein transglycosylase F from Pseudomonas paraeruginosa (strain DSM 24068 / PA7) (Pseudomonas aeruginosa (strain PA7)).